Reading from the N-terminus, the 432-residue chain is Glutamate-1-semialdehyde 2,1-aminomutase (432 aa).

The residue at position 266 (Lys266) is an N6-(pyridoxal phosphate)lysine.

It belongs to the class-III pyridoxal-phosphate-dependent aminotransferase family. HemL subfamily. Homodimer. Requires pyridoxal 5'-phosphate as cofactor.

It is found in the cytoplasm. The enzyme catalyses (S)-4-amino-5-oxopentanoate = 5-aminolevulinate. The protein operates within porphyrin-containing compound metabolism; protoporphyrin-IX biosynthesis; 5-aminolevulinate from L-glutamyl-tRNA(Glu): step 2/2. The polypeptide is Glutamate-1-semialdehyde 2,1-aminomutase (Janthinobacterium sp. (strain Marseille) (Minibacterium massiliensis)).